We begin with the raw amino-acid sequence, 335 residues long: Biotin synthase (335 aa).

Positions 46–274 (YDIQLASLFS…KSKIRLSAGR (229 aa)) constitute a Radical SAM core domain. 3 residues coordinate [4Fe-4S] cluster: cysteine 61, cysteine 65, and cysteine 68. 4 residues coordinate [2Fe-2S] cluster: cysteine 105, cysteine 137, cysteine 197, and arginine 269.

Belongs to the radical SAM superfamily. Biotin synthase family. Homodimer. The cofactor is [4Fe-4S] cluster. It depends on [2Fe-2S] cluster as a cofactor.

The catalysed reaction is (4R,5S)-dethiobiotin + (sulfur carrier)-SH + 2 reduced [2Fe-2S]-[ferredoxin] + 2 S-adenosyl-L-methionine = (sulfur carrier)-H + biotin + 2 5'-deoxyadenosine + 2 L-methionine + 2 oxidized [2Fe-2S]-[ferredoxin]. It functions in the pathway cofactor biosynthesis; biotin biosynthesis; biotin from 7,8-diaminononanoate: step 2/2. Its function is as follows. Catalyzes the conversion of dethiobiotin (DTB) to biotin by the insertion of a sulfur atom into dethiobiotin via a radical-based mechanism. The protein is Biotin synthase of Prochlorococcus marinus (strain MIT 9215).